A 293-amino-acid polypeptide reads, in one-letter code: 4-hydroxy-tetrahydrodipicolinate synthase (293 aa).

T45 provides a ligand contact to pyruvate. Residue Y133 is the Proton donor/acceptor of the active site. K161 (schiff-base intermediate with substrate) is an active-site residue. I203 is a pyruvate binding site.

The protein belongs to the DapA family. Homotetramer; dimer of dimers.

It localises to the cytoplasm. The catalysed reaction is L-aspartate 4-semialdehyde + pyruvate = (2S,4S)-4-hydroxy-2,3,4,5-tetrahydrodipicolinate + H2O + H(+). The protein operates within amino-acid biosynthesis; L-lysine biosynthesis via DAP pathway; (S)-tetrahydrodipicolinate from L-aspartate: step 3/4. In terms of biological role, catalyzes the condensation of (S)-aspartate-beta-semialdehyde [(S)-ASA] and pyruvate to 4-hydroxy-tetrahydrodipicolinate (HTPA). The polypeptide is 4-hydroxy-tetrahydrodipicolinate synthase (Shewanella denitrificans (strain OS217 / ATCC BAA-1090 / DSM 15013)).